Here is a 414-residue protein sequence, read N- to C-terminus: Esterase FrsA (414 aa).

The protein belongs to the FrsA family.

The catalysed reaction is a carboxylic ester + H2O = an alcohol + a carboxylate + H(+). Catalyzes the hydrolysis of esters. This chain is Esterase FrsA, found in Shigella dysenteriae serotype 1 (strain Sd197).